The sequence spans 344 residues: Holliday junction branch migration complex subunit RuvB (344 aa).

A large ATPase domain (RuvB-L) region spans residues 1–185 (MSTSRSDALK…FGIDFRYDYY (185 aa)). Residues Leu24, Arg25, Gly66, Lys69, Thr70, Thr71, 132 to 134 (EDY), Arg175, Tyr185, and Arg222 contribute to the ATP site. Thr70 provides a ligand contact to Mg(2+). The segment at 186–256 (TADLLQEITQ…IADRALNALD (71 aa)) is small ATPAse domain (RuvB-S). The tract at residues 259–344 (EEGLDDMDAR…AADQDLFDQE (86 aa)) is head domain (RuvB-H). DNA contacts are provided by Arg314 and Arg319.

Belongs to the RuvB family. Homohexamer. Forms an RuvA(8)-RuvB(12)-Holliday junction (HJ) complex. HJ DNA is sandwiched between 2 RuvA tetramers; dsDNA enters through RuvA and exits via RuvB. An RuvB hexamer assembles on each DNA strand where it exits the tetramer. Each RuvB hexamer is contacted by two RuvA subunits (via domain III) on 2 adjacent RuvB subunits; this complex drives branch migration. In the full resolvosome a probable DNA-RuvA(4)-RuvB(12)-RuvC(2) complex forms which resolves the HJ.

The protein resides in the cytoplasm. It carries out the reaction ATP + H2O = ADP + phosphate + H(+). The RuvA-RuvB-RuvC complex processes Holliday junction (HJ) DNA during genetic recombination and DNA repair, while the RuvA-RuvB complex plays an important role in the rescue of blocked DNA replication forks via replication fork reversal (RFR). RuvA specifically binds to HJ cruciform DNA, conferring on it an open structure. The RuvB hexamer acts as an ATP-dependent pump, pulling dsDNA into and through the RuvAB complex. RuvB forms 2 homohexamers on either side of HJ DNA bound by 1 or 2 RuvA tetramers; 4 subunits per hexamer contact DNA at a time. Coordinated motions by a converter formed by DNA-disengaged RuvB subunits stimulates ATP hydrolysis and nucleotide exchange. Immobilization of the converter enables RuvB to convert the ATP-contained energy into a lever motion, pulling 2 nucleotides of DNA out of the RuvA tetramer per ATP hydrolyzed, thus driving DNA branch migration. The RuvB motors rotate together with the DNA substrate, which together with the progressing nucleotide cycle form the mechanistic basis for DNA recombination by continuous HJ branch migration. Branch migration allows RuvC to scan DNA until it finds its consensus sequence, where it cleaves and resolves cruciform DNA. This Salinibacter ruber (strain DSM 13855 / M31) protein is Holliday junction branch migration complex subunit RuvB.